We begin with the raw amino-acid sequence, 430 residues long: Histidine--tRNA ligase (430 aa).

The protein belongs to the class-II aminoacyl-tRNA synthetase family. In terms of assembly, homodimer.

The protein resides in the cytoplasm. It catalyses the reaction tRNA(His) + L-histidine + ATP = L-histidyl-tRNA(His) + AMP + diphosphate + H(+). The sequence is that of Histidine--tRNA ligase from Anaplasma marginale (strain St. Maries).